The primary structure comprises 330 residues: Olfactory receptor 5P73 (330 aa).

Over 1–28 the chain is Extracellular; sequence MAFLEDGNHTTVTEFFLLGLTDDPVLRD. The N-linked (GlcNAc...) asparagine glycan is linked to Asn8. Residues 29-49 form a helical membrane-spanning segment; it reads ILFIIILCIYLVTVSGNLSTI. Residues 50–57 lie on the Cytoplasmic side of the membrane; it reads LLIRVSSQ. Residues 58-78 form a helical membrane-spanning segment; the sequence is LHHPMYFILSHLASVDIGISS. Residues 79–102 lie on the Extracellular side of the membrane; it reads SVTPNMLATFLVKQNTISYIGCSI. A disulfide bond links Cys100 and Cys192. The chain crosses the membrane as a helical span at residues 103-123; that stretch reads QFTSAAFFGTVECFLLATMAY. Over 124 to 136 the chain is Cytoplasmic; it reads DRFVAICNPLLYS. The helical transmembrane segment at 137 to 157 threads the bilayer; that stretch reads TKMSTEACIQLVVGSYIQGFL. Topologically, residues 158–199 are extracellular; that stretch reads NASFFTLSFFSLFFCGPNRINDFYCDFAPLLELSCSDVTVAV. The chain crosses the membrane as a helical span at residues 200–220; that stretch reads VITSISAGFITLTTVFVIAIS. Over 221–240 the chain is Cytoplasmic; it reads YSCIFITIMKMHSTESRCKA. A helical transmembrane segment spans residues 241-261; it reads FSTCTSHLTAVILFYGTAIFI. Residues 262–274 lie on the Extracellular side of the membrane; that stretch reads YVMPKSSYSTDQN. A helical transmembrane segment spans residues 275–295; the sequence is KVLSIFYTVVIPMLNPLIYSL. Topologically, residues 296 to 330 are cytoplasmic; sequence RNNEIKEALKRHLGKKVFSYGNLFCKTHYNHNYPV.

This sequence belongs to the G-protein coupled receptor 1 family.

Its subcellular location is the cell membrane. In terms of biological role, potential odorant receptor. The polypeptide is Olfactory receptor 5P73 (Mus musculus (Mouse)).